We begin with the raw amino-acid sequence, 194 residues long: Imidazoleglycerol-phosphate dehydratase (194 aa).

Belongs to the imidazoleglycerol-phosphate dehydratase family.

Its subcellular location is the cytoplasm. It catalyses the reaction D-erythro-1-(imidazol-4-yl)glycerol 3-phosphate = 3-(imidazol-4-yl)-2-oxopropyl phosphate + H2O. It participates in amino-acid biosynthesis; L-histidine biosynthesis; L-histidine from 5-phospho-alpha-D-ribose 1-diphosphate: step 6/9. This Bacillus cereus (strain AH820) protein is Imidazoleglycerol-phosphate dehydratase.